A 298-amino-acid chain; its full sequence is Probable tRNA(His) guanylyltransferase (298 aa).

Mg(2+)-binding residues include D58, G59, and D105. GTP contacts are provided by residues 58–63 (DGRNFH) and 104–105 (SD).

It belongs to the tRNA(His) guanylyltransferase family. As to quaternary structure, homotetramer. Interacts with MFN1 and MFN2; functions as a guanyl-nucleotide exchange factor/GEF for MFN2 and also probably MFN1. It depends on Mg(2+) as a cofactor.

The protein localises to the cytoplasm. Its subcellular location is the mitochondrion. It catalyses the reaction a 5'-end ribonucleotide-tRNA(His) + GTP + ATP + H2O = a 5'-end phospho-guanosine-ribonucleotide-tRNA(His) + AMP + 2 diphosphate + H(+). In terms of biological role, adds a GMP to the 5'-end of tRNA(His) after transcription and RNase P cleavage. This step is essential for proper recognition of the tRNA and for the fidelity of protein synthesis. Also functions as a guanyl-nucleotide exchange factor/GEF for the MFN1 and MFN2 mitofusins thereby regulating mitochondrial fusion. By regulating both mitochondrial dynamics and bioenergetic function, it contributes to cell survival following oxidative stress. The polypeptide is Probable tRNA(His) guanylyltransferase (THG1L) (Bos taurus (Bovine)).